Consider the following 265-residue polypeptide: Upstream stimulatory factor (265 aa).

Residues methionine 1 to aspartate 18 show a composition bias toward basic and acidic residues. Disordered stretches follow at residues methionine 1–glutamate 21 and alanine 119–glycine 149. Positions glycine 134–serine 144 are enriched in polar residues. The 56-residue stretch at arginine 190–leucine 245 folds into the bHLH domain.

Efficient DNA binding requires dimerization with another bHLH protein. Binds DNA as a homodimer or a heterodimer. As to expression, enriched in ectodermal tissue.

The protein localises to the nucleus. May act as a transcription factor which recognizes the CACGTG motif on SPEC gene promoters. This chain is Upstream stimulatory factor, found in Strongylocentrotus purpuratus (Purple sea urchin).